We begin with the raw amino-acid sequence, 309 residues long: Tagatose-6-phosphate kinase (309 aa).

It belongs to the carbohydrate kinase PfkB family. LacC subfamily.

The catalysed reaction is D-tagatofuranose 6-phosphate + ATP = D-tagatofuranose 1,6-bisphosphate + ADP + H(+). The protein operates within carbohydrate metabolism; D-tagatose 6-phosphate degradation; D-glyceraldehyde 3-phosphate and glycerone phosphate from D-tagatose 6-phosphate: step 1/2. This chain is Tagatose-6-phosphate kinase, found in Streptococcus pyogenes serotype M4 (strain MGAS10750).